The sequence spans 265 residues: Hemin import ATP-binding protein HmuV (265 aa).

Positions leucine 13 to proline 249 constitute an ABC transporter domain. An ATP-binding site is contributed by glycine 45–serine 52.

It belongs to the ABC transporter superfamily. Heme (hemin) importer (TC 3.A.1.14.5) family. The complex is composed of two ATP-binding proteins (HmuV), two transmembrane proteins (HmuU) and a solute-binding protein (HmuT).

The protein localises to the cell inner membrane. Part of the ABC transporter complex HmuTUV involved in hemin import. Responsible for energy coupling to the transport system. This chain is Hemin import ATP-binding protein HmuV, found in Photobacterium damsela subsp. piscicida (Pasteurella piscicida).